The primary structure comprises 53 residues: Large ribosomal subunit protein bL32c (53 aa).

This sequence belongs to the bacterial ribosomal protein bL32 family.

It is found in the plastid. The protein localises to the chloroplast. This Guillardia theta (Cryptophyte) protein is Large ribosomal subunit protein bL32c (rpl32).